Here is a 732-residue protein sequence, read N- to C-terminus: Photosystem I P700 chlorophyll a apoprotein A1 (732 aa).

8 helical membrane-spanning segments follow: residues 61-84, 145-168, 185-209, 278-296, 317-340, 356-382, 414-436, and 510-528; these read VFSS…FHGA, LKYA…FHMH, NAGQ…HIAL, IASH…GIIA, WHSR…HHIY, LSLF…IFMI, IIMG…IYIH, and FMVH…LILM. [4Fe-4S] cluster contacts are provided by C552 and C561. 2 consecutive transmembrane segments (helical) span residues 568–589 and 644–666; these read HVFL…HFFW and LSGY…MFLW. H655 is a binding site for chlorophyll a'. Chlorophyll a contacts are provided by M663 and Y671. Residue W672 coordinates phylloquinone. A helical transmembrane segment spans residues 704 to 724; it reads AVGLVHYMLGGIGTTWAFFLA.

It belongs to the PsaA/PsaB family. As to quaternary structure, the PsaA/B heterodimer binds the P700 chlorophyll special pair and subsequent electron acceptors. PSI consists of a core antenna complex that captures photons, and an electron transfer chain that converts photonic excitation into a charge separation. The eukaryotic PSI reaction center is composed of at least 11 subunits. P700 is a chlorophyll a/chlorophyll a' dimer, A0 is one or more chlorophyll a, A1 is one or both phylloquinones and FX is a shared 4Fe-4S iron-sulfur center. serves as cofactor.

The protein localises to the plastid. It is found in the chloroplast thylakoid membrane. The enzyme catalyses reduced [plastocyanin] + hnu + oxidized [2Fe-2S]-[ferredoxin] = oxidized [plastocyanin] + reduced [2Fe-2S]-[ferredoxin]. Functionally, psaA and PsaB bind P700, the primary electron donor of photosystem I (PSI), as well as the electron acceptors A0, A1 and FX. PSI is a plastocyanin/cytochrome c6-ferredoxin oxidoreductase, converting photonic excitation into a charge separation, which transfers an electron from the donor P700 chlorophyll pair to the spectroscopically characterized acceptors A0, A1, FX, FA and FB in turn. Oxidized P700 is reduced on the lumenal side of the thylakoid membrane by plastocyanin or cytochrome c6. The polypeptide is Photosystem I P700 chlorophyll a apoprotein A1 (Heterocapsa triquetra (Dinoflagellate)).